The sequence spans 167 residues: Ubiquitin-fold modifier-conjugating enzyme 1 (167 aa).

Cys116 functions as the Glycyl thioester intermediate in the catalytic mechanism. A Glycyl lysine isopeptide (Lys-Gly) (interchain with G-Cter in UFM1) cross-link involves residue Lys122.

The protein belongs to the ubiquitin-conjugating enzyme family. UFC1 subfamily. In terms of assembly, interacts with UBA5 (via C-terminus). Interacts with UFL1. Interacts with UFM1. Interacts with KIRREL3. In terms of processing, ufmylated at Lys-122. Deufmylated by UFSP1.

Functionally, E2-like enzyme which specifically catalyzes the second step in ufmylation. Accepts the ubiquitin-like modifier UFM1 from the E1 enzyme UBA5 and forms an intermediate with UFM1 via a thioester linkage. Ufmylation is involved in various processes, such as ribosome recycling, response to DNA damage, interferon response or reticulophagy (also called ER-phagy). This is Ubiquitin-fold modifier-conjugating enzyme 1 from Bos taurus (Bovine).